Reading from the N-terminus, the 104-residue chain is L-rhamnose mutarotase (104 aa).

Tyrosine 18 is a binding site for substrate. Histidine 22 (proton donor) is an active-site residue. Residues tyrosine 41 and tryptophan 76–tryptophan 77 contribute to the substrate site.

It belongs to the rhamnose mutarotase family. Homodimer.

It localises to the cytoplasm. The catalysed reaction is alpha-L-rhamnose = beta-L-rhamnose. The protein operates within carbohydrate metabolism; L-rhamnose metabolism. Its function is as follows. Involved in the anomeric conversion of L-rhamnose. The chain is L-rhamnose mutarotase from Opitutus terrae (strain DSM 11246 / JCM 15787 / PB90-1).